The sequence spans 427 residues: Homoprotocatechuate catabolism bifunctional isomerase/decarboxylase (427 aa).

2 Approximate repeats span residues 1–202 (MKGT…LENP) and 203–405 (VVDE…VGDE). Positions 276, 278, and 307 each coordinate a divalent metal cation.

The protein belongs to the FAH family. As to quaternary structure, monomer. It depends on Mg(2+) as a cofactor.

The enzyme catalyses (2E,4Z)-5-hydroxypenta-2,4-diene-1,2,5-tricarboxylate = (3E,5R)-5-carboxy-2-oxohept-3-enedioate. The catalysed reaction is (3E,5R)-5-carboxy-2-oxohept-3-enedioate + H(+) = (4Z)-2-oxohept-4-enedioate + CO2. It participates in aromatic compound metabolism; 4-hydroxyphenylacetate degradation; pyruvate and succinate semialdehyde from 4-hydroxyphenylacetate: step 4/7. The protein operates within aromatic compound metabolism; 4-hydroxyphenylacetate degradation; pyruvate and succinate semialdehyde from 4-hydroxyphenylacetate: step 5/7. In terms of biological role, decarboxylates OPET (5-oxo-pent-3-ene-1,2,5-tricarboxylic acid) into HHDD (2-hydroxy-hept-2,4-diene-1,7-dioate) and isomerizes it to OHED (2-oxo-hept-3-ene-1,7-dioate). In Escherichia coli, this protein is Homoprotocatechuate catabolism bifunctional isomerase/decarboxylase (hpcE).